The following is a 595-amino-acid chain: Flap endonuclease 1 (595 aa).

The tract at residues 1–106 is N-domain; sequence MGIKGLTKFI…SELEKRGEKR (106 aa). Position 34 (Asp34) interacts with Mg(2+). DNA-binding residues include Arg47 and Arg72. Residues Asp88, Glu160, Glu162, Asp181, and Asp183 each contribute to the Mg(2+) site. An I-domain region spans residues 124 to 267; it reads EIKKQSGRTV…KTAYNLIKEY (144 aa). Residue Glu160 coordinates DNA. DNA contacts are provided by Gly245 and Asp247. Asp247 is a Mg(2+) binding site. Residues 350 to 358 are interaction with PCNA; the sequence is TQRRLDNFF. The disordered stretch occupies residues 370–493; sequence NEESQIKKEV…TGDVYSFPNG (124 aa). Positions 392–401 are enriched in polar residues; it reads NDSSTKLNSK. Residues 406-425 show a composition bias toward basic and acidic residues; the sequence is PKGEKESKTEKDDGDTHNGN. Over residues 426–436 the composition is skewed to acidic residues; it reads DNEEEGGEGET. Basic and acidic residues predominate over residues 461–475; the sequence is HKSDSESGNVKKEST.

It belongs to the XPG/RAD2 endonuclease family. FEN1 subfamily. Interacts with PCNA. Three molecules of FEN1 bind to one PCNA trimer with each molecule binding to one PCNA monomer. PCNA stimulates the nuclease activity without altering cleavage specificity. The cofactor is Mg(2+). In terms of processing, phosphorylated. Phosphorylation upon DNA damage induces relocalization to the nuclear plasma.

Its subcellular location is the nucleus. It localises to the nucleolus. The protein resides in the nucleoplasm. It is found in the mitochondrion. In terms of biological role, structure-specific nuclease with 5'-flap endonuclease and 5'-3' exonuclease activities involved in DNA replication and repair. During DNA replication, cleaves the 5'-overhanging flap structure that is generated by displacement synthesis when DNA polymerase encounters the 5'-end of a downstream Okazaki fragment. It enters the flap from the 5'-end and then tracks to cleave the flap base, leaving a nick for ligation. Also involved in the long patch base excision repair (LP-BER) pathway, by cleaving within the apurinic/apyrimidinic (AP) site-terminated flap. Acts as a genome stabilization factor that prevents flaps from equilibrating into structures that lead to duplications and deletions. Also possesses 5'-3' exonuclease activity on nicked or gapped double-stranded DNA, and exhibits RNase H activity. Also involved in replication and repair of rDNA and in repairing mitochondrial DNA. This chain is Flap endonuclease 1, found in Plasmodium knowlesi (strain H).